The following is a 461-amino-acid chain: Homogentisate 1,2-dioxygenase (461 aa).

Fe cation-binding residues include His341, Glu347, and His377.

The protein belongs to the homogentisate dioxygenase family. Requires Fe cation as cofactor.

It catalyses the reaction homogentisate + O2 = 4-maleylacetoacetate + H(+). Its pathway is amino-acid degradation; L-phenylalanine degradation; acetoacetate and fumarate from L-phenylalanine: step 4/6. The protein is Homogentisate 1,2-dioxygenase (HGO) of Arabidopsis thaliana (Mouse-ear cress).